The following is a 358-amino-acid chain: UPF0283 membrane protein PM0909 (358 aa).

Helical transmembrane passes span 62–82, 90–110, and 213–233; these read LALT…QWLV, WIYF…VSSL, and ALEA…MFFL.

It belongs to the UPF0283 family.

The protein localises to the cell inner membrane. This is UPF0283 membrane protein PM0909 from Pasteurella multocida (strain Pm70).